A 273-amino-acid chain; its full sequence is Formamidopyrimidine-DNA glycosylase (273 aa).

Pro2 functions as the Schiff-base intermediate with DNA in the catalytic mechanism. The Proton donor role is filled by Glu3. Catalysis depends on Lys58, which acts as the Proton donor; for beta-elimination activity. Residues His92, Arg111, and Lys153 each coordinate DNA. The segment at 238-272 adopts an FPG-type zinc-finger fold; the sequence is KVYGREGQSCLSCSSTIIKIKHSGRSTFYCKTCQY. Residue Arg262 is the Proton donor; for delta-elimination activity of the active site.

The protein belongs to the FPG family. In terms of assembly, monomer. It depends on Zn(2+) as a cofactor.

The catalysed reaction is Hydrolysis of DNA containing ring-opened 7-methylguanine residues, releasing 2,6-diamino-4-hydroxy-5-(N-methyl)formamidopyrimidine.. It carries out the reaction 2'-deoxyribonucleotide-(2'-deoxyribose 5'-phosphate)-2'-deoxyribonucleotide-DNA = a 3'-end 2'-deoxyribonucleotide-(2,3-dehydro-2,3-deoxyribose 5'-phosphate)-DNA + a 5'-end 5'-phospho-2'-deoxyribonucleoside-DNA + H(+). Functionally, involved in base excision repair of DNA damaged by oxidation or by mutagenic agents. Acts as a DNA glycosylase that recognizes and removes damaged bases. Has a preference for oxidized purines, such as 7,8-dihydro-8-oxoguanine (8-oxoG). Has AP (apurinic/apyrimidinic) lyase activity and introduces nicks in the DNA strand. Cleaves the DNA backbone by beta-delta elimination to generate a single-strand break at the site of the removed base with both 3'- and 5'-phosphates. This chain is Formamidopyrimidine-DNA glycosylase, found in Rickettsia africae (strain ESF-5).